The primary structure comprises 353 residues: DNA-directed RNA polymerase subunit alpha (353 aa).

The alpha N-terminal domain (alpha-NTD) stretch occupies residues 1-234; the sequence is MVREKVTVST…DLFIPFLHTE (234 aa). The segment at 267 to 353 is alpha C-terminal domain (alpha-CTD); that stretch reads KRALKSIFID…LAQLIDSKSG (87 aa).

It belongs to the RNA polymerase alpha chain family. In plastids the minimal PEP RNA polymerase catalytic core is composed of four subunits: alpha, beta, beta', and beta''. When a (nuclear-encoded) sigma factor is associated with the core the holoenzyme is formed, which can initiate transcription.

The protein resides in the plastid. Its subcellular location is the chloroplast. The catalysed reaction is RNA(n) + a ribonucleoside 5'-triphosphate = RNA(n+1) + diphosphate. In terms of biological role, DNA-dependent RNA polymerase catalyzes the transcription of DNA into RNA using the four ribonucleoside triphosphates as substrates. This Daucus carota (Wild carrot) protein is DNA-directed RNA polymerase subunit alpha.